A 118-amino-acid polypeptide reads, in one-letter code: Large ribosomal subunit protein uL22 (118 aa).

The protein belongs to the universal ribosomal protein uL22 family. As to quaternary structure, part of the 50S ribosomal subunit.

In terms of biological role, this protein binds specifically to 23S rRNA; its binding is stimulated by other ribosomal proteins, e.g. L4, L17, and L20. It is important during the early stages of 50S assembly. It makes multiple contacts with different domains of the 23S rRNA in the assembled 50S subunit and ribosome. The globular domain of the protein is located near the polypeptide exit tunnel on the outside of the subunit, while an extended beta-hairpin is found that lines the wall of the exit tunnel in the center of the 70S ribosome. The polypeptide is Large ribosomal subunit protein uL22 (Listeria innocua serovar 6a (strain ATCC BAA-680 / CLIP 11262)).